The sequence spans 1639 residues: Peroxide stress-activated histidine kinase mak1 (1639 aa).

Positions 38 to 49 are enriched in polar residues; the sequence is SFTNSQNSSVGS. The disordered stretch occupies residues 38-76; sequence SFTNSQNSSVGSVHSPILESPTSLNRQHRNSFSFNNVSS. Low complexity predominate over residues 67-76; sequence NSFSFNNVSS. The 71-residue stretch at 716-786 folds into the PAS 1 domain; the sequence is PFPLLKVIID…NDWKSSLFSG (71 aa). Positions 789–841 constitute a PAC 1 domain; that stretch reads FYHEIRLQRFDNVYRYFICRAVPLRDCTGSVLHFFGTMTDVHDQKLAERELQK. Residues 848 to 920 enclose the PAS 2 domain; that stretch reads NENSYRSLAE…ESLEGTFNNQ (73 aa). In terms of domain architecture, PAC 2 spans 929–982; the sequence is FAAEIRFRSTDGHYRWHLVKSVCVNNSADTSTNLWLGTCTDIHDHKMLEEKLQE. The Histidine kinase domain occupies 1000–1223; it reads NMSHEIRTPL…RFMWTATFTM (224 aa). Phosphohistidine; by autocatalysis is present on H1003. Positions 1507–1629 constitute a Response regulatory domain; it reads SVLLAEDNII…HLSLIISGIL (123 aa). D1559 bears the 4-aspartylphosphate mark.

The protein localises to the cytoplasm. The catalysed reaction is ATP + protein L-histidine = ADP + protein N-phospho-L-histidine.. Involved in the control of the SAPK-dependent transcriptional response to peroxide stress. Also has a role in G2/M regulation. The protein is Peroxide stress-activated histidine kinase mak1 (mak1) of Schizosaccharomyces pombe (strain 972 / ATCC 24843) (Fission yeast).